Here is a 61-residue protein sequence, read N- to C-terminus: Small ribosomal subunit protein uS14 (61 aa).

The Zn(2+) site is built by cysteine 24, cysteine 27, cysteine 40, and cysteine 43.

It belongs to the universal ribosomal protein uS14 family. Zinc-binding uS14 subfamily. In terms of assembly, part of the 30S ribosomal subunit. Contacts proteins S3 and S10. Requires Zn(2+) as cofactor.

Its function is as follows. Binds 16S rRNA, required for the assembly of 30S particles and may also be responsible for determining the conformation of the 16S rRNA at the A site. The protein is Small ribosomal subunit protein uS14 of Caldicellulosiruptor bescii (strain ATCC BAA-1888 / DSM 6725 / KCTC 15123 / Z-1320) (Anaerocellum thermophilum).